The sequence spans 400 residues: Integumentary mucin A.1 (400 aa).

A signal peptide spans methionine 1–alanine 20. P-type domains follow at residues glutamine 21–alanine 64 and leucine 72–threonine 115. 3 disulfide bridges follow: cysteine 23/cysteine 49, cysteine 33/cysteine 48, and cysteine 43/cysteine 60. The N-linked (GlcNAc...) asparagine glycan is linked to asparagine 63. Intrachain disulfides connect cysteine 74–cysteine 100, cysteine 84–cysteine 99, and cysteine 94–cysteine 111. 2 stretches are compositionally biased toward low complexity: residues proline 122 to proline 264 and glutamate 272 to threonine 299. The disordered stretch occupies residues proline 122 to proline 302. 14 consecutive repeat copies span residues alanine 127–threonine 135, valine 136–threonine 144, valine 145–threonine 153, valine 154–threonine 162, valine 163–threonine 171, valine 172–threonine 180, valine 181–threonine 189, valine 190–threonine 198, valine 199–threonine 207, valine 208–threonine 216, valine 217–threonine 225, valine 226–threonine 234, alanine 235–threonine 243, and valine 244–threonine 252. The 15 X 9 AA approximate tandem repeats of [AV]-[SP]-T-T-[AP]-E-T-T-T stretch occupies residues alanine 127–aspartate 261. The 1-15; approximate repeat unit spans residues glutamate 253–aspartate 261. 7 consecutive repeat copies span residues glutamate 272–threonine 275, glutamate 276–threonine 279, glutamate 280–threonine 283, glutamate 284–threonine 287, glutamate 288–threonine 291, glutamate 292–threonine 295, and glutamate 296–threonine 299. Residues glutamate 272–threonine 299 are 7 X 4 AA repeats of E-T-T-T. P-type domains lie at threonine 298 to glutamate 343 and alanine 351 to alanine 394. Disulfide bonds link cysteine 312-cysteine 327, cysteine 322-cysteine 339, cysteine 353-cysteine 379, cysteine 363-cysteine 378, and cysteine 373-cysteine 390.

Post-translationally, extensively O-glycosylated. Consist of about 70% carbohydrate and 30% protein. Expressed and stored exclusively in mature mucous glands of the skin.

The protein localises to the secreted. In terms of biological role, could be involved in defense against microbial infections. Protects the epithelia from external environment. This is Integumentary mucin A.1 from Xenopus laevis (African clawed frog).